Reading from the N-terminus, the 149-residue chain is Protein K7 (149 aa).

The protein belongs to the orthopoxvirus OPG044 family. In terms of assembly, interacts with DDX3; this interaction inhibits DDX3 and suppresses DDX3-mediated IFN-beta promoter induction. Interacts with TRAF6 and IRAK2; these interactions suppress TLR-dependent NF-KappaB activation.

Its subcellular location is the host cytoplasm. In terms of biological role, virulence factor that affects the acute immune response to infection. Bcl-2-like protein which, through its interaction with the DEAD box RNA helicase DDX3X/DDX3, prevents TBK1/IKKepsilon-mediated IRF3 activation. Contributes to virulence by binding to the host TRAF6 and IRAK2 and preventing host NF-kappa-B activation. This is Protein K7 (OPG044) from Homo sapiens (Human).